Here is an 899-residue protein sequence, read N- to C-terminus: Auxin response factor 25 (899 aa).

Positions 1 to 20 are disordered; the sequence is MKLSPPASADMPQALPENDG. Residues 132 to 234 constitute a DNA-binding region (TF-B3); sequence FCKTLTASDT…QLLLGIRRAN (103 aa). The span at 546–564 shows a compositional bias: low complexity; the sequence is RQHVLQEQSSQEMQQQLPS. The tract at residues 546–586 is disordered; sequence RQHVLQEQSSQEMQQQLPSSDHHVADVASESGSAPQAQSSL. Residues 575–586 are compositionally biased toward polar residues; that stretch reads ESGSAPQAQSSL. In terms of domain architecture, PB1 spans 766–850; it reads ATFVKVYKSG…WCIKILSPQE (85 aa).

The protein belongs to the ARF family. In terms of assembly, homodimers and heterodimers. As to expression, expressed in roots, culms, leaves and young panicles.

Its subcellular location is the nucleus. Functionally, auxin response factors (ARFs) are transcriptional factors that bind specifically to the DNA sequence 5'-TGTCTC-3' found in the auxin-responsive promoter elements (AuxREs). This is Auxin response factor 25 (ARF25) from Oryza sativa subsp. japonica (Rice).